A 590-amino-acid chain; its full sequence is CTP synthase (590 aa).

An amidoligase domain region spans residues 1–281 (MPALRKHPQT…DAYVVRRLNL (281 aa)). Serine 23 is a CTP binding site. Position 23 (serine 23) interacts with UTP. ATP-binding positions include 24–29 (SLGKGL) and aspartate 81. Aspartate 81 and glutamate 155 together coordinate Mg(2+). CTP-binding positions include 162 to 164 (DIE), 202 to 207 (KTKPTQ), and lysine 238. Residues 202–207 (KTKPTQ) and lysine 238 contribute to the UTP site. The region spanning 306–554 (RIALVGKYID…IGAAIDYKAA (249 aa)) is the Glutamine amidotransferase type-1 domain. Position 369 (glycine 369) interacts with L-glutamine. Cysteine 396 serves as the catalytic Nucleophile; for glutamine hydrolysis. L-glutamine contacts are provided by residues 397-400 (LGLQ), glutamate 419, and arginine 480. Residues histidine 527 and glutamate 529 contribute to the active site.

Belongs to the CTP synthase family. In terms of assembly, homotetramer.

It catalyses the reaction UTP + L-glutamine + ATP + H2O = CTP + L-glutamate + ADP + phosphate + 2 H(+). The enzyme catalyses L-glutamine + H2O = L-glutamate + NH4(+). It carries out the reaction UTP + NH4(+) + ATP = CTP + ADP + phosphate + 2 H(+). The protein operates within pyrimidine metabolism; CTP biosynthesis via de novo pathway; CTP from UDP: step 2/2. Its activity is regulated as follows. Allosterically activated by GTP, when glutamine is the substrate; GTP has no effect on the reaction when ammonia is the substrate. The allosteric effector GTP functions by stabilizing the protein conformation that binds the tetrahedral intermediate(s) formed during glutamine hydrolysis. Inhibited by the product CTP, via allosteric rather than competitive inhibition. Functionally, catalyzes the ATP-dependent amination of UTP to CTP with either L-glutamine or ammonia as the source of nitrogen. Regulates intracellular CTP levels through interactions with the four ribonucleotide triphosphates. The sequence is that of CTP synthase from Mycolicibacterium smegmatis (strain ATCC 700084 / mc(2)155) (Mycobacterium smegmatis).